A 63-amino-acid polypeptide reads, in one-letter code: Large ribosomal subunit protein bL28 (63 aa).

Belongs to the bacterial ribosomal protein bL28 family.

The sequence is that of Large ribosomal subunit protein bL28 from Pelobacter propionicus (strain DSM 2379 / NBRC 103807 / OttBd1).